A 214-amino-acid polypeptide reads, in one-letter code: LOB domain-containing protein 7 (214 aa).

The LOB domain occupies 12–113; it reads TACAACKHQR…TELNLTRQQI (102 aa).

It belongs to the LOB domain-containing protein family.

This Arabidopsis thaliana (Mouse-ear cress) protein is LOB domain-containing protein 7 (LBD7).